We begin with the raw amino-acid sequence, 117 residues long: MATKTSNFVSLRVSLFILLLFISSQVAIADAKHLQQLRRKLQIVRRSRSQRGRQYNPPTLRVPPPPPPPLPQMPSAATPPPMPQLSPLQPKMHVSSLQPQMLYPPPSLPYASSPTST.

An N-terminal signal peptide occupies residues 1-31 (MATKTSNFVSLRVSLFILLLFISSQVAIADA). Residues 41 to 55 (LQIVRRSRSQRGRQY) carry the SCOOP motif motif. Residues 42 to 51 (QIVRRSRSQR) are compositionally biased toward basic residues. The tract at residues 42 to 117 (QIVRRSRSQR…LPYASSPTST (76 aa)) is disordered. The SxS motif essential for MIK2 binding signature appears at 47 to 49 (SRS). Positions 60–84 (LRVPPPPPPPLPQMPSAATPPPMPQ) are enriched in pro residues.

Interacts with MIK2 (via extracellular leucine-rich repeat domain); this interaction triggers the formation of complex between MIK2 and the BAK1/SERK3 and SERK4 coreceptors, and subsequent BAK1 activation by phosphorylation.

The protein resides in the cell membrane. The protein localises to the secreted. It localises to the extracellular space. It is found in the apoplast. Brassicaceae-specific phytocytokine (plant endogenous peptide released into the apoplast) perceived by MIK2 in a BAK1/SERK3 and SERK4 coreceptors-dependent manner, that modulates various physiological and antimicrobial processes including growth prevention and reactive oxygen species (ROS) response regulation. In Arabidopsis thaliana (Mouse-ear cress), this protein is Serine rich endogenous peptide 5.